The following is a 305-amino-acid chain: Homoserine O-acetyltransferase (305 aa).

Cys142 acts as the Acyl-thioester intermediate in catalysis. 2 residues coordinate substrate: Lys163 and Ser192. His235 serves as the catalytic Proton acceptor. Residue Glu237 is part of the active site. Arg249 provides a ligand contact to substrate.

It belongs to the MetA family.

It is found in the cytoplasm. It catalyses the reaction L-homoserine + acetyl-CoA = O-acetyl-L-homoserine + CoA. It participates in amino-acid biosynthesis; L-methionine biosynthesis via de novo pathway; O-acetyl-L-homoserine from L-homoserine: step 1/1. Functionally, transfers an acetyl group from acetyl-CoA to L-homoserine, forming acetyl-L-homoserine. This Phocaeicola vulgatus (strain ATCC 8482 / DSM 1447 / JCM 5826 / CCUG 4940 / NBRC 14291 / NCTC 11154) (Bacteroides vulgatus) protein is Homoserine O-acetyltransferase.